The primary structure comprises 416 residues: Lactose permease (416 aa).

The Cytoplasmic segment spans residues 1–13 (MKLSELAPRERHN). Residues 14–34 (FIYFMLFFFFYYFIMSAYFPF) traverse the membrane as a helical segment. Over 35–50 (FPVWLAEVNHLTKTET) the chain is Periplasmic. A helical membrane pass occupies residues 51 to 71 (GIVFSCISLFAIIFQPVFGLI). Topologically, residues 72–80 (SDKLGLRKH) are cytoplasmic. A helical transmembrane segment spans residues 81–101 (LLWTITILLILFAPFFIFVFS). P102 is a topological domain (periplasmic). The helical transmembrane segment at 103 to 123 (LLQMNIMAGALVGGVYLGIVF) threads the bilayer. Residues 124-149 (SSRSGAVEAYIERVSRANRFEYGKVR) lie on the Cytoplasmic side of the membrane. 2 consecutive transmembrane segments (helical) span residues 150–170 (VSGCVGWALCASITGILFSID) and 171–191 (PNITFWIASGFALILGVLLWV). The Cytoplasmic segment spans residues 192–223 (SKPESSNSAEVIDALGANRQAFSMRTAAELFR). A helical membrane pass occupies residues 224–244 (MPRFWGFIIYVVGVASVYDVF). Over 245 to 267 (DQQFANFFKGFFSSPQRGTEVFG) the chain is Periplasmic. The helical transmembrane segment at 268-288 (FVTTGGELLNALIMFCAPAII) threads the bilayer. Residues 289–295 (NRIGAKN) lie on the Cytoplasmic side of the membrane. Transmembrane regions (helical) follow at residues 296-316 (ALLIAGLIMSVRILGSSFATS) and 317-337 (AVEVIILKMLHMFEIPFLLVG). Residues 338–353 (TFKYISSAFKGKLSAT) are Cytoplasmic-facing. A helical membrane pass occupies residues 354-374 (LFLIGFNLSKQLSSVVLSAWV). Residues 375-384 (GRMYDTVGFH) are Periplasmic-facing. The chain crosses the membrane as a helical span at residues 385–405 (QAYLILGCITLSFTVISLFTL). At 406-416 (KGSKTLLPATA) the chain is on the cytoplasmic side.

This sequence belongs to the major facilitator superfamily. Oligosaccharide:H(+) symporter (OHS) (TC 2.A.1.5) family.

It localises to the cell inner membrane. The enzyme catalyses lactose(in) + H(+)(in) = lactose(out) + H(+)(out). In terms of biological role, responsible for transport of beta-galactosides into the cell, with the concomitant import of a proton (symport system). The sequence is that of Lactose permease (lacY) from Klebsiella oxytoca.